The sequence spans 173 residues: Alpha-crystallin A chain (173 aa).

Met1 carries the post-translational modification N-acetylmethionine. The sHSP domain maps to 52 to 162 (LFRTVLESGI…SHNERPIPVS (111 aa)). Zn(2+) contacts are provided by His100, Glu102, His107, and His154. A disordered region spans residues 144-173 (PKVQSNTDPSHNERPIPVSREEKPTSAPPS). Over residues 153–167 (SHNERPIPVSREEKP) the composition is skewed to basic and acidic residues. Ser162 carries O-linked (GlcNAc) serine glycosylation.

The protein belongs to the small heat shock protein (HSP20) family. As to quaternary structure, heteropolymer composed of three CRYAA and one CRYAB subunits. Inter-subunit bridging via zinc ions enhances stability, which is crucial as there is no protein turn over in the lens. Can also form homodimers and homotetramers (dimers of dimers) which serve as the building blocks of homooligomers. Within homooligomers, the zinc-binding motif is created from residues of 3 different molecules. His-100 and Glu-102 from one molecule are ligands of the zinc ion, and His-107 and His-154 residues from additional molecules complete the site with tetrahedral coordination geometry.

The protein resides in the cytoplasm. It localises to the nucleus. In terms of biological role, contributes to the transparency and refractive index of the lens. May act as a chaperone, preventing aggregation of various proteins under a wide range of stress conditions. The protein is Alpha-crystallin A chain (CRYAA) of Tupinambis teguixin (Golden tegu).